We begin with the raw amino-acid sequence, 634 residues long: Ankyrin repeat protein OPG025 (634 aa).

ANK repeat units follow at residues D36–I69, N70–S100, N103–S134, M175–Y211, I307–R337, and H412–I441.

Belongs to the orthopoxvirus OPG025 family. Interacts with components of host SCF complex CUL1 and SKP1 and components of the cullin deneddylation/COP9 signalosome complex subunits COPS7A and COPS7B.

In terms of biological role, plays a role in the inhibition of host immune repsonse by counteracting the action of interferons on early events in the viral replication cycle. This chain is Ankyrin repeat protein OPG025 (OPG035), found in Vaccinia virus (strain Western Reserve) (VACV).